The primary structure comprises 311 residues: Aspartate carbamoyltransferase catalytic subunit (311 aa).

Positions 55 and 56 each coordinate carbamoyl phosphate. Lysine 85 provides a ligand contact to L-aspartate. Residues arginine 106, histidine 135, and glutamine 138 each contribute to the carbamoyl phosphate site. L-aspartate-binding residues include arginine 168 and arginine 230. 2 residues coordinate carbamoyl phosphate: leucine 268 and proline 269.

Belongs to the aspartate/ornithine carbamoyltransferase superfamily. ATCase family. In terms of assembly, heterododecamer (2C3:3R2) of six catalytic PyrB chains organized as two trimers (C3), and six regulatory PyrI chains organized as three dimers (R2).

The enzyme catalyses carbamoyl phosphate + L-aspartate = N-carbamoyl-L-aspartate + phosphate + H(+). The protein operates within pyrimidine metabolism; UMP biosynthesis via de novo pathway; (S)-dihydroorotate from bicarbonate: step 2/3. In terms of biological role, catalyzes the condensation of carbamoyl phosphate and aspartate to form carbamoyl aspartate and inorganic phosphate, the committed step in the de novo pyrimidine nucleotide biosynthesis pathway. The protein is Aspartate carbamoyltransferase catalytic subunit of Yersinia enterocolitica serotype O:8 / biotype 1B (strain NCTC 13174 / 8081).